The following is a 199-amino-acid chain: MGEVVKDGREEVIQAWYMDDSEEDQRLPHHKDPKEFLSLDKLAELGVLSWRLDADNYETDEDLKKIRESRGYSYMDFCEVCPEKLPNYEVKVKSFFEEHLHTDEEIRYCVAGSGYFDVRDRNEAWIRVWVKKGGMIVLPAGIYHRFTVDSDNYIKAMRLFVGEPVWTPYNRPHDHLPARKEYIDNFVKVNEGGVIDASA.

Fe(2+) contacts are provided by His99, His101, Glu105, and His144. Residues His99, His101, Glu105, and His144 each coordinate Ni(2+).

This sequence belongs to the acireductone dioxygenase (ARD) family. Fe(2+) is required as a cofactor. The cofactor is Ni(2+).

It localises to the cytoplasm. Its subcellular location is the nucleus. The catalysed reaction is 1,2-dihydroxy-5-(methylsulfanyl)pent-1-en-3-one + O2 = 4-methylsulfanyl-2-oxobutanoate + formate + 2 H(+). It carries out the reaction 1,2-dihydroxy-5-(methylsulfanyl)pent-1-en-3-one + O2 = 3-(methylsulfanyl)propanoate + CO + formate + 2 H(+). It participates in amino-acid biosynthesis; L-methionine biosynthesis via salvage pathway; L-methionine from S-methyl-5-thio-alpha-D-ribose 1-phosphate: step 5/6. In terms of biological role, catalyzes 2 different reactions between oxygen and the acireductone 1,2-dihydroxy-3-keto-5-methylthiopentene (DHK-MTPene) depending upon the metal bound in the active site. Fe-containing acireductone dioxygenase (Fe-ARD) produces formate and 2-keto-4-methylthiobutyrate (KMTB), the alpha-ketoacid precursor of methionine in the methionine recycle pathway. Ni-containing acireductone dioxygenase (Ni-ARD) produces methylthiopropionate, carbon monoxide and formate, and does not lie on the methionine recycle pathway. The protein is Acireductone dioxygenase 3 (ARD3) of Arabidopsis thaliana (Mouse-ear cress).